We begin with the raw amino-acid sequence, 511 residues long: Ulvan-active sulfatase (511 aa).

The signal sequence occupies residues 1–34; the sequence is MNFKQNIVYKKMAISMKITAIRPIALVISFTLLS. Cysteine 35 is lipidated: N-palmitoyl cysteine. Cysteine 35 is lipidated: S-diacylglycerol cysteine. Residues aspartate 59 and cysteine 99 each coordinate Ca(2+). Cysteine 99 serves as the catalytic Nucleophile. A 3-oxoalanine (Cys) modification is found at cysteine 99. The active site involves histidine 149. Ca(2+) is bound at residue aspartate 305.

The protein belongs to the sulfatase family. Requires Ca(2+) as cofactor. In terms of processing, the conversion to 3-oxoalanine (also known as C-formylglycine, FGly), of a serine or cysteine residue in prokaryotes and of a cysteine residue in eukaryotes, is critical for catalytic activity. This post-translational modification is severely defective in multiple sulfatase deficiency (MSD).

It localises to the cell membrane. Sulfatase involved in ulvan degradation. Ulvan is the main polysaccharide component of the Ulvales (green seaweed) cell wall. It is composed of disaccharide building blocks comprising 3-sulfated rhamnose (Rha3S) linked to D-glucuronic acid (GlcA), L-iduronic acid (IduA), or D-xylose (Xyl). The chain is Ulvan-active sulfatase from Formosa agariphila (strain DSM 15362 / KCTC 12365 / LMG 23005 / KMM 3901 / M-2Alg 35-1).